The sequence spans 256 residues: (R)-S-adenosyl-L-methionine hydrolase (256 aa).

4 residues coordinate adenosine: Asp-7, His-41, Asp-68, and Asn-183. Asn-183, Tyr-212, Ser-226, Glu-231, Val-234, and Met-236 together coordinate (R)-S-adenosyl-L-methionine. Val-234 lines the adenosine pocket.

The protein belongs to the SAM hydrolase / SAM-dependent halogenase family. Homotrimer.

It carries out the reaction (R)-S-adenosyl-L-methionine + H2O = adenosine + L-methionine + H(+). In terms of biological role, catalyzes the hydrolysis of S-adenosyl-L-methionine (SAM) into adenosine and L-methionine. Is likely stereoselective, specifically hydrolyzing (R)-S-adenosyl-L-methionine ((R)-SAM), the inactive form of the ubiquitous cofactor SAM, and not the active form of SAM, (S)-S-adenosyl-L-methionine. Probaly plays a role in preventing accumulation of (R)-S-adenosyl-L-methionine in cells; maintenance of (S)-S-denosyl-L-methionine homochirality is important for cellular health given that the (R)-form is largely inactive as a methyl donor and can function as an inhibitor of methyltransferases. Is unable to mediate a fluorination or chlorination reaction with SAM. The chain is (R)-S-adenosyl-L-methionine hydrolase from Pyrococcus horikoshii (strain ATCC 700860 / DSM 12428 / JCM 9974 / NBRC 100139 / OT-3).